Here is a 447-residue protein sequence, read N- to C-terminus: Monocarboxylate transporter 11 (447 aa).

At 1–11 (MTPKPAGPPDG) the chain is on the cytoplasmic side. 12 consecutive transmembrane segments (helical) span residues 12–32 (GWGW…YGLL), 54–74 (AWVS…GSAL), 80–100 (ARPV…FSAF), 107–127 (LYLG…APAL), 139–159 (VLAV…LAPA), 162–182 (FLLD…VTLH), 219–239 (AFSV…VPYV), 249–269 (GMGG…DACA), 288–308 (LVVF…VPTV), 330–350 (GSYA…GGVV), 354–374 (GLVM…SGFL), and 383–403 (ASFL…MGLP). Residues 404–447 (RALPSCRPASPPATPPPERGELLPVPQVSLLSAGGTGSIRDTTC) lie on the Cytoplasmic side of the membrane.

It belongs to the major facilitator superfamily. Monocarboxylate porter (TC 2.A.1.13) family. In terms of assembly, interacts with isoform 2 of BSG.

The protein resides in the endoplasmic reticulum membrane. The protein localises to the cell membrane. The catalysed reaction is pyruvate(out) + H(+)(out) = pyruvate(in) + H(+)(in). In terms of biological role, proton-linked monocarboxylate transporter. It catalyzes the transport of pyruvate across the plasma membrane. Probably involved in hepatic lipid metabolism: overexpression results in an increase of triacylglycerol(TAG) levels, small increases in intracellular diacylglycerols and decreases in lysophosphatidylcholine, cholesterol ester and sphingomyelin lipids. The polypeptide is Monocarboxylate transporter 11 (Slc16a11) (Mus musculus (Mouse)).